Here is a 793-residue protein sequence, read N- to C-terminus: Serine/threonine-protein kinase CLA4 (793 aa).

Positions 8–27 (RELSESDFQDIGPAPKPPPV) are disordered. The region spanning 56–168 (QRKKSGWVSY…WLDSIFSKCP (113 aa)) is the PH domain. In terms of domain architecture, CRIB spans 173 to 186 (VSSPTNFTHKVHVG). 2 disordered regions span residues 243–369 (AAAQ…ESPT) and 383–476 (QKQL…RPTM). 3 stretches are compositionally biased toward polar residues: residues 258 to 276 (TLSSNSSQASMQQIASTPP), 312 to 337 (GVTTSPSVHHQNTQHGKQQSPTQSGP), and 355 to 369 (LGNSVSSVATKESPT). Positions 498–776 (FQMIEKAGQG…TEELLHHSFF (279 aa)) constitute a Protein kinase domain. Residues 504-512 (AGQGASGSV) and Lys-545 each bind ATP. Asp-644 acts as the Proton acceptor in catalysis.

The protein belongs to the protein kinase superfamily. STE Ser/Thr protein kinase family. STE20 subfamily.

The enzyme catalyses L-seryl-[protein] + ATP = O-phospho-L-seryl-[protein] + ADP + H(+). It carries out the reaction L-threonyl-[protein] + ATP = O-phospho-L-threonyl-[protein] + ADP + H(+). Its function is as follows. Required for hyphal maturation and for septation. In Eremothecium gossypii (strain ATCC 10895 / CBS 109.51 / FGSC 9923 / NRRL Y-1056) (Yeast), this protein is Serine/threonine-protein kinase CLA4 (CLA4).